The following is a 269-amino-acid chain: Enoyl-[acyl-carrier-protein] reductase [NADH] (269 aa).

NAD(+) is bound by residues 20–21, 64–65, and 95–96; these read SI, DV, and IG. Y158 serves as a coordination point for substrate. The NAD(+) site is built by K165 and I194. T266 carries the post-translational modification Phosphothreonine.

The protein belongs to the short-chain dehydrogenases/reductases (SDR) family. FabI subfamily. Homodimer. Homotetramer. Post-translationally, is phosphorylated in vivo. Phosphorylation on Thr-266 decreases enzymatic activity.

It localises to the secreted. Its subcellular location is the cell wall. It carries out the reaction a 2,3-saturated acyl-[ACP] + NAD(+) = a (2E)-enoyl-[ACP] + NADH + H(+). It catalyses the reaction a 2,3-saturated acyl-CoA + NAD(+) = a (2E)-enoyl-CoA + NADH + H(+). The enzyme catalyses (2E)-octenoyl-CoA + NADH + H(+) = octanoyl-CoA + NAD(+). The catalysed reaction is (2E)-dodecenoyl-CoA + NADH + H(+) = dodecanoyl-CoA + NAD(+). It participates in lipid metabolism; mycolic acid biosynthesis. Its activity is regulated as follows. InhA activity is controlled via phosphorylation: phosphorylation on Thr-266 decreases InhA activity and likely negatively regulates biosynthesis of mycolic acids and growth of the bacterium. InhA activity is likely inhibited by activated isoniazid, hexadecynoyl-CoA and octadecynoyl-CoA, which also block the biosynthesis of mycolic acids. The antitubercular pro-drug isoniazid (INH) is oxidatively activated by the catalase-peroxidase KatG and then covalently binds NAD to form an adduct that inhibits the activity of InhA. The inhibitory adduct is the isonicotinic-acyl-NADH where the isonicotinic-acyl group replaces the 4S (and not the 4R) hydrogen of NADH. Similarly, the antitubercular pro-drugs ethionamide (ETH) and prothionamide (PTH) are activated by the flavoprotein monooxygenase EthA, and forms an adduct with NAD (ETH-NAD and PTH-NAD, respectively) that is a tight-binding inhibitor of InhA. Functionally, enoyl-ACP reductase of the type II fatty acid syntase (FAS-II) system, which is involved in the biosynthesis of mycolic acids, a major component of mycobacterial cell walls. Catalyzes the NADH-dependent reduction of the double bond of 2-trans-enoyl-[acyl-carrier protein], an essential step in the fatty acid elongation cycle of the FAS-II pathway. Shows preference for long-chain fatty acyl thioester substrates (&gt;C16), and can also use 2-trans-enoyl-CoAs as alternative substrates. The mycobacterial FAS-II system utilizes the products of the FAS-I system as primers to extend fatty acyl chain lengths up to C56, forming the meromycolate chain that serves as the precursor for final mycolic acids. Its function is as follows. Is the primary target of the first-line antitubercular drug isoniazid (INH) and of the second-line drug ethionamide (ETH). Overexpressed inhA confers INH and ETH resistance to M.smegmatis. The mechanism of isoniazid action against InhA is covalent attachment of the activated form of the drug to the nicotinamide ring of NAD and binding of the INH-NAD adduct to the active site of InhA. Similarly, the ETH-NAD adduct binds InhA. The polypeptide is Enoyl-[acyl-carrier-protein] reductase [NADH] (Mycolicibacterium smegmatis (strain ATCC 700084 / mc(2)155) (Mycobacterium smegmatis)).